We begin with the raw amino-acid sequence, 785 residues long: MTDLEVSAIQVIDENKVFNSLLVDYMKQFYSQNNSSDDKGLNYHIVSVFGSQSTGKSTLLNHLFHTKFDVMDESQRQQTTKGIWLAHANHISSSNESGDFANNTKNVFVMDVEGTDGRERGEDQDFERKAALFALSTSEILIINIWEHQVGLYQGANLGLLRTVFEVNLSLFAKNKQRCLLLFVIRDHVGNTSLESLSDVLTLDLQNIWSQLNKPQGTEGFELDDFFDLKFVALAHKLLQPDKFIEDISVLGDKFISEDQLFNEGYHRAIPIDGWSMYAEQVWEQIETNQDLDLPTQQILVARFRCDEISSQVYESFHEQFVKSNWDDLSFTEIGNSLKELRQNAVQQYDILAGRYSESVYLQRKKLLVQKVDLSILEVYTSVLQKLIRQSRDLYLKQIESSLTKKEAGIIFYQVLDNAERESLKYFNENTSLISFVDVDDSEARSYDPSPKLRELEEELSNLRTELVNKEQENIKTKIPRKFKSHFKLIVQDELSNIKPSSWEELLDQFRQVSEKLLAKYKSPDSNYDFHLGLSKEKNKELHEQVLIKFWIKFKEILNDFVTETNVLRLLVSKFEDEFRYDEEGLPVVWKNSAEIDVKFAKARNSALDLLPLFSLAHTAEGEILPDYDIAHDEAEAESDNEEDDGFKESHKFAHLLSARDQDAIRNKFKKQTDALYVETKRSVINSKTEVPLYIYALLLVLGWNEFMIILRNPLLITLLLIGLTGLYLGYKTKLLGPIVQVVQAMIQELQDQAKNKLRDVLVSEPEAPSQVRIGKEVDATKDED.

Topologically, residues 1 to 690 (MTDLEVSAIQ…KRSVINSKTE (690 aa)) are cytoplasmic. Residues 40-266 (GLNYHIVSVF…SEDQLFNEGY (227 aa)) form the GB1/RHD3-type G domain. 50 to 57 (GSQSTGKS) is a GTP binding site. Residues 451–479 (PKLRELEEELSNLRTELVNKEQENIKTKI) are a coiled coil. The chain crosses the membrane as a helical span at residues 691–711 (VPLYIYALLLVLGWNEFMIIL). At 712–714 (RNP) the chain is on the lumenal side. Residues 715 to 735 (LLITLLLIGLTGLYLGYKTKL) form a helical membrane-spanning segment. The Cytoplasmic segment spans residues 736-785 (LGPIVQVVQAMIQELQDQAKNKLRDVLVSEPEAPSQVRIGKEVDATKDED).

Belongs to the TRAFAC class dynamin-like GTPase superfamily. GB1/RHD3 GTPase family. RHD3 subfamily.

It is found in the endoplasmic reticulum membrane. In terms of biological role, cooperates with the reticulon proteins and tubule-shaping DP1 family proteins to generate and maintain the structure of the tubular endoplasmic reticulum network. Has GTPase activity, which is required for its function in ER organization. In Komagataella phaffii (strain GS115 / ATCC 20864) (Yeast), this protein is Protein SEY1.